The sequence spans 208 residues: Fibroblast growth factor 6 (208 aa).

The N-terminal stretch at 1–37 (MALGQRLFITMSRGAGRVQGTLQALVFLGVLVGMVVP) is a signal peptide. N-linked (GlcNAc...) asparagine glycosylation occurs at N45. An intrachain disulfide couples C90 to C157.

The protein belongs to the heparin-binding growth factors family. Interacts with FGFR1, FGFR2 and FGFR4. Affinity between fibroblast growth factors (FGFs) and their receptors is increased by heparan sulfate glycosaminoglycans that function as coreceptors. Embryos, adult muscles and adult testis.

Its subcellular location is the secreted. It localises to the extracellular space. Functionally, plays an important role in the regulation of cell proliferation, cell differentiation, angiogenesis and myogenesis, and is required for normal muscle regeneration. This chain is Fibroblast growth factor 6 (Fgf6), found in Mus musculus (Mouse).